Reading from the N-terminus, the 187-residue chain is Small ribosomal subunit protein uS7 (187 aa).

Belongs to the universal ribosomal protein uS7 family. In terms of assembly, part of the 30S ribosomal subunit.

Its function is as follows. One of the primary rRNA binding proteins, it binds directly to 16S rRNA where it nucleates assembly of the head domain of the 30S subunit. Is located at the subunit interface close to the decoding center. The sequence is that of Small ribosomal subunit protein uS7 from Picrophilus torridus (strain ATCC 700027 / DSM 9790 / JCM 10055 / NBRC 100828 / KAW 2/3).